A 66-amino-acid polypeptide reads, in one-letter code: Cocaine- and amphetamine-regulated transcript protein (66 aa).

2 disulfide bridges follow: C34–C52 and C40–C60.

This sequence belongs to the CART family.

It is found in the secreted. Satiety factor closely associated with the actions of leptin and neuropeptide y; this anorectic peptide inhibits both normal and starvation-induced feeding and completely blocks the feeding response induced by neuropeptide Y and regulated by leptin in the hypothalamus. The sequence is that of Cocaine- and amphetamine-regulated transcript protein (CARTPT) from Sus scrofa (Pig).